Consider the following 306-residue polypeptide: Ornithine carbamoyltransferase (306 aa).

Residues 51–54, glutamine 78, arginine 102, and 129–132 each bind carbamoyl phosphate; these read STRT and HPCQ. L-ornithine-binding positions include asparagine 160, aspartate 223, and 227 to 228; that span reads SM. Residues 263 to 264 and arginine 291 each bind carbamoyl phosphate; that span reads CL.

Belongs to the aspartate/ornithine carbamoyltransferase superfamily. OTCase family.

Its subcellular location is the cytoplasm. The enzyme catalyses carbamoyl phosphate + L-ornithine = L-citrulline + phosphate + H(+). The protein operates within amino-acid biosynthesis; L-arginine biosynthesis; L-arginine from L-ornithine and carbamoyl phosphate: step 1/3. Functionally, reversibly catalyzes the transfer of the carbamoyl group from carbamoyl phosphate (CP) to the N(epsilon) atom of ornithine (ORN) to produce L-citrulline. The polypeptide is Ornithine carbamoyltransferase (Nostoc sp. (strain PCC 7120 / SAG 25.82 / UTEX 2576)).